The chain runs to 320 residues: Acetyl-coenzyme A carboxylase carboxyl transferase subunit alpha (320 aa).

In terms of domain architecture, CoA carboxyltransferase C-terminal spans 39 to 293; sequence ALDAKAAKLL…RGAIAAMLKE (255 aa).

It belongs to the AccA family. As to quaternary structure, acetyl-CoA carboxylase is a heterohexamer composed of biotin carboxyl carrier protein (AccB), biotin carboxylase (AccC) and two subunits each of ACCase subunit alpha (AccA) and ACCase subunit beta (AccD).

Its subcellular location is the cytoplasm. It carries out the reaction N(6)-carboxybiotinyl-L-lysyl-[protein] + acetyl-CoA = N(6)-biotinyl-L-lysyl-[protein] + malonyl-CoA. It participates in lipid metabolism; malonyl-CoA biosynthesis; malonyl-CoA from acetyl-CoA: step 1/1. Component of the acetyl coenzyme A carboxylase (ACC) complex. First, biotin carboxylase catalyzes the carboxylation of biotin on its carrier protein (BCCP) and then the CO(2) group is transferred by the carboxyltransferase to acetyl-CoA to form malonyl-CoA. The polypeptide is Acetyl-coenzyme A carboxylase carboxyl transferase subunit alpha (Ruegeria pomeroyi (strain ATCC 700808 / DSM 15171 / DSS-3) (Silicibacter pomeroyi)).